We begin with the raw amino-acid sequence, 758 residues long: Glucocorticoid receptor (758 aa).

Disordered regions lie at residues 1 to 61 and 349 to 382; these read MDPG…SANG and GMSS…PSGP. A modulating region spans residues 1–386; the sequence is MDPGGLKHSK…AKPSGPTHKI (386 aa). The span at 26–42 shows a compositional bias: low complexity; it reads GSFSGDTGGSKSTTSTS. 2 consecutive NR C4-type zinc fingers follow at residues 387–407 and 432–456; these read CLVC…CGSC and CAGR…FRKC. Positions 387–461 form a DNA-binding region, nuclear receptor; that stretch reads CLVCSDEASG…RFRKCLQAGM (75 aa). The interval 462-498 is hinge; sequence NLEARKNKKLIRLKGQQTTMEPNPPPPDERACALIPK. In terms of domain architecture, NR LBD spans 499 to 733; that stretch reads SMPQLVPTML…FPEMLAEIIS (235 aa).

This sequence belongs to the nuclear hormone receptor family. NR3 subfamily. As to quaternary structure, heteromultimeric cytoplasmic complex with HSP90AA1, HSPA1A/HSPA1B, and FKBP5 or another immunophilin such as PPID, STIP1, or the immunophilin homolog PPP5C. Upon ligand binding FKBP5 dissociates from the complex and FKBP4 takes its place, thereby linking the complex to dynein and mediating transport to the nucleus, where the complex dissociates. Directly interacts with UNC45A. Binds to DNA as a homodimer, and as heterodimer with NR3C2 or the retinoid X receptor. Binds STAT5A and STAT5B homodimers and heterodimers. Interacts with NRIP1, POU2F1, POU2F2 and TRIM28. Interacts with several coactivator complexes, including the SMARCA4 complex, CREBBP/EP300, TADA2L (Ada complex) and p160 coactivators such as NCOA2 and NCOA6. Interaction with BAG1 inhibits transactivation. Interacts with HEXIM1, PELP1 and TGFB1I1. Interacts with NCOA1, NCOA3, SMARCA4, SMARCC1, SMARCD1, and SMARCE1. In terms of processing, phosphorylated in the absence of hormone; becomes hyperphosphorylated in the presence of glucocorticoids. May be dephosphorylated by PPP5C, attenuates NR3C1 action. As to expression, isoform 1 is expressed in all tissues tested including liver, gills, intestine, skeletal muscle, kidney, heart, spleen, stomach, brain, pituitary, ovary, testis, skin and bladder. Isoform 2 is found only in testis.

Its subcellular location is the cytoplasm. It is found in the nucleus. It localises to the mitochondrion. The protein resides in the cytoskeleton. The protein localises to the spindle. Its subcellular location is the microtubule organizing center. It is found in the centrosome. In terms of biological role, receptor for glucocorticoids (GC). Has a dual mode of action: as a transcription factor that binds to glucocorticoid response elements (GRE), both for nuclear and mitochondrial DNA, and as a modulator of other transcription factors. Affects inflammatory responses, cellular proliferation and differentiation in target tissues. Involved in chromatin remodeling. Plays a role in rapid mRNA degradation by binding to the 5' UTR of target mRNAs and interacting with PNRC2 in a ligand-dependent manner which recruits the RNA helicase UPF1 and the mRNA-decapping enzyme DCP1A, leading to RNA decay. Could act as a coactivator for STAT5-dependent transcription upon growth hormone (GH) stimulation and could reveal an essential role of hepatic GR in the control of body growth. Mediates glucocorticoid-induced apoptosis. Promotes accurate chromosome segregation during mitosis. May act as a tumor suppressor. May play a negative role in adipogenesis through the regulation of lipolytic and antilipogenic gene expression. This chain is Glucocorticoid receptor (nr3c1), found in Oncorhynchus mykiss (Rainbow trout).